A 268-amino-acid chain; its full sequence is Centromere protein Q (268 aa).

The segment at 1 to 31 (MSGKANASKKNFEQLKRNPKRKKDNEEVVLS) is disordered. Ser31 carries the post-translational modification Phosphoserine. The stretch at 170 to 203 (ELMTGNIQSLKNKIQILASEVEEEEERVKQIHQI) forms a coiled coil. Phosphoserine is present on Ser249.

It belongs to the CENP-Q/OKP1 family. Component of the CENPA-CAD complex, composed of CENPI, CENPK, CENPL, CENPO, CENPP, CENPQ, CENPR and CENPS. The CENPA-CAD complex interacts with the CENPA-NAC complex, at least composed of CENPA, CENPC, CENPH, CENPM, CENPN, CENPT and CENPU.

Its subcellular location is the nucleus. The protein resides in the chromosome. It localises to the centromere. In terms of biological role, component of the CENPA-CAD (nucleosome distal) complex, a complex recruited to centromeres which is involved in assembly of kinetochore proteins, mitotic progression and chromosome segregation. May be involved in incorporation of newly synthesized CENPA into centromeres via its interaction with the CENPA-NAC complex. Plays an important role in chromosome congression and in the recruitment of CENP-O complex (which comprises CENPO, CENPP, CENPQ and CENPU), CENPE and PLK1 to the kinetochores. In Macaca fascicularis (Crab-eating macaque), this protein is Centromere protein Q (CENPQ).